Reading from the N-terminus, the 163-residue chain is Type II secretion system protein M (163 aa).

Over 1–19 (MMDKLQGWWRSISAREQRL) the chain is Cytoplasmic. The helical transmembrane segment at 20–40 (VAVGGSCLLIGFCYWIVWQPI) threads the bilayer. Residues 41 to 163 (ANRIAERERQ…VRRLQLSRPQ (123 aa)) are Periplasmic-facing.

Belongs to the GSP M family. As to quaternary structure, type II secretion system is composed of four main components: the outer membrane complex, the inner membrane complex, the cytoplasmic secretion ATPase and the periplasm-spanning pseudopilus. Forms homodimers. Interacts with ExeL/GspL. Interacts with ExeE/GspE and ExeF/GspF.

It localises to the cell inner membrane. Inner membrane component of the type II secretion system required for the energy-dependent secretion of extracellular factors such as proteases and toxins from the periplasm. Plays a role in the complex assembly and recruits ExeL resulting in a stable complex in the inner membrane. Provides thus a link between the energy-providing ExeE protein in the cytoplasm and the rest of the T2SS machinery. The protein is Type II secretion system protein M (exeM) of Aeromonas hydrophila.